The primary structure comprises 1182 residues: DNA-directed RNA polymerase subunit beta (1182 aa).

A compositionally biased stretch (acidic residues) spans 1150–1162 (DEEVEMKDEDDDN). The tract at residues 1150–1182 (DEEVEMKDEDDDNIPNATSALEQVVQPTVTEEE) is disordered. Residues 1171–1182 (EQVVQPTVTEEE) are compositionally biased toward low complexity.

It belongs to the RNA polymerase beta chain family. The RNAP catalytic core consists of 2 alpha, 1 beta, 1 beta' and 1 omega subunit. When a sigma factor is associated with the core the holoenzyme is formed, which can initiate transcription.

The enzyme catalyses RNA(n) + a ribonucleoside 5'-triphosphate = RNA(n+1) + diphosphate. Functionally, DNA-dependent RNA polymerase catalyzes the transcription of DNA into RNA using the four ribonucleoside triphosphates as substrates. In Exiguobacterium sp. (strain ATCC BAA-1283 / AT1b), this protein is DNA-directed RNA polymerase subunit beta.